The following is a 162-amino-acid chain: Protein NrdI (162 aa).

Belongs to the NrdI family.

Probably involved in ribonucleotide reductase function. This chain is Protein NrdI, found in Streptococcus pyogenes serotype M28 (strain MGAS6180).